A 385-amino-acid polypeptide reads, in one-letter code: Rhomboid domain-containing protein 3 (385 aa).

5 helical membrane passes run 13–33 (ALPLASSVLMLLLSCLWLLGA), 58–78 (LGHTALPGLLLSLLLLPTLGW), 95–115 (VLALATGLLAVLLAGLGVSGA), 146–166 (WLLPWLLLALTLLLSSEPPFL), and 168–188 (LLCGLLTGLAYAAGAFQWLEL). The interval 238-264 (PPYLASSDSWPHSDGSAQLPPRLGPGQ) is disordered. In terms of domain architecture, UBA spans 322–361 (SVSSLRLQQLQHMGFPTEQAAVALAATGRVEGAVSLLVEG).

The protein localises to the membrane. The sequence is that of Rhomboid domain-containing protein 3 (Rhbdd3) from Mus musculus (Mouse).